The following is a 338-amino-acid chain: Terpene synthase 1 (338 aa).

The short motif at 80 to 85 (DDALDS) is the DDxx(x)D/E motif element. Positions 220–228 (NDLVSYEKE) match the NDxxSxxxD/E motif motif.

Belongs to the terpene synthase family.

It carries out the reaction (2E,6E)-farnesyl diphosphate = (2S,3R,6S,9S)-(-)-protoillud-7-ene + diphosphate. Terpene synthase that converts its substrate farnesyl diphosphate (FPP) into the sesquiterpene protoillud-7-ene. In Cavenderia fasciculata (Slime mold), this protein is Terpene synthase 1.